Consider the following 240-residue polypeptide: 2,3,4,5-tetrahydropyridine-2,6-dicarboxylate N-acetyltransferase (240 aa).

The protein belongs to the transferase hexapeptide repeat family. DapH subfamily.

It carries out the reaction (S)-2,3,4,5-tetrahydrodipicolinate + acetyl-CoA + H2O = L-2-acetamido-6-oxoheptanedioate + CoA. It functions in the pathway amino-acid biosynthesis; L-lysine biosynthesis via DAP pathway; LL-2,6-diaminopimelate from (S)-tetrahydrodipicolinate (acetylase route): step 1/3. Functionally, catalyzes the transfer of an acetyl group from acetyl-CoA to tetrahydrodipicolinate. The chain is 2,3,4,5-tetrahydropyridine-2,6-dicarboxylate N-acetyltransferase from Halalkalibacterium halodurans (strain ATCC BAA-125 / DSM 18197 / FERM 7344 / JCM 9153 / C-125) (Bacillus halodurans).